The sequence spans 132 residues: Ubiquinol-cytochrome c reductase complex assembly factor 4 (132 aa).

The N-terminal stretch at Met1 to Ala15 is a signal peptide. The Mitochondrial matrix portion of the chain corresponds to Leu16 to Lys78. The segment at Leu29–His72 is disordered. A helical membrane pass occupies residues Val79–Leu95. Over Arg96–Thr132 the chain is Mitochondrial intermembrane. Positions Gly110 to Thr132 are disordered.

Belongs to the UQCC4 family. Forms a complex, named COMB/coordinator of mitochondrial CYTB biogenesis, composed of UQCC1, UQCC2, UQCC4, UQCC5 and UQCC6; stabilizes nascent cytochrome b/MT-CYB and promotes its membrane insertion. Forms a complex, named COMA, composed of UQCC1, UQCC2 and UQCC4; activates MT-CYB translation. Forms a complex, named COMC, composed of UQCC1, UQCC2; UQCC3 and UQCC4; mediates MT-CYB hemylation and association with the first nuclear-encoded complex III subunit UQCRQ. Complexes COMA and COMB are bound to the mitochondrion inner membrane by UQCC4.

Its subcellular location is the mitochondrion inner membrane. Its function is as follows. Required for the assembly and stability of the mitochondrial ubiquinol-cytochrome c reductase complex (complex III (CIII) or cytochrome b-c1 complex), a multisubunit transmembrane complex that is part of the mitochondrial electron transport chain (ETC) which drives oxidative phosphorylation. This is Ubiquinol-cytochrome c reductase complex assembly factor 4 from Homo sapiens (Human).